The chain runs to 63 residues: UPF0337 protein PSPTO_1596 (63 aa).

Positions 20–63 are disordered; that stretch reads KQAVGKATDNTKLQAEGKAQELKGEGQQAKGEVKDAVKKGVDKV. A compositionally biased stretch (basic and acidic residues) spans 50–63; it reads GEVKDAVKKGVDKV.

It belongs to the UPF0337 (CsbD) family.

The protein is UPF0337 protein PSPTO_1596 of Pseudomonas syringae pv. tomato (strain ATCC BAA-871 / DC3000).